Here is a 246-residue protein sequence, read N- to C-terminus: Acetoacetate decarboxylase (246 aa).

The active-site Schiff-base intermediate with acetoacetate is Lys-116.

The protein belongs to the ADC family.

It carries out the reaction acetoacetate + H(+) = acetone + CO2. Functionally, catalyzes the conversion of acetoacetate to acetone and carbon dioxide. In Burkholderia multivorans (strain ATCC 17616 / 249), this protein is Acetoacetate decarboxylase.